Reading from the N-terminus, the 206-residue chain is Ribosomal RNA small subunit methyltransferase G (206 aa).

S-adenosyl-L-methionine contacts are provided by residues G73, L78, 124 to 125 (VE), and R139.

The protein belongs to the methyltransferase superfamily. RNA methyltransferase RsmG family.

The protein resides in the cytoplasm. It carries out the reaction guanosine(527) in 16S rRNA + S-adenosyl-L-methionine = N(7)-methylguanosine(527) in 16S rRNA + S-adenosyl-L-homocysteine. Specifically methylates the N7 position of guanine in position 527 of 16S rRNA. The protein is Ribosomal RNA small subunit methyltransferase G of Yersinia enterocolitica serotype O:8 / biotype 1B (strain NCTC 13174 / 8081).